The chain runs to 240 residues: Proteasome subunit alpha (240 aa).

The protein belongs to the peptidase T1A family. As to quaternary structure, the 20S proteasome core is composed of 14 alpha and 14 beta subunits that assemble into four stacked heptameric rings, resulting in a barrel-shaped structure. The two inner rings, each composed of seven catalytic beta subunits, are sandwiched by two outer rings, each composed of seven alpha subunits. The catalytic chamber with the active sites is on the inside of the barrel. Has a gated structure, the ends of the cylinder being occluded by the N-termini of the alpha-subunits. Is capped by the proteasome-associated ATPase, ARC.

It is found in the cytoplasm. Its pathway is protein degradation; proteasomal Pup-dependent pathway. Its activity is regulated as follows. The formation of the proteasomal ATPase ARC-20S proteasome complex, likely via the docking of the C-termini of ARC into the intersubunit pockets in the alpha-rings, may trigger opening of the gate for substrate entry. Interconversion between the open-gate and close-gate conformations leads to a dynamic regulation of the 20S proteasome proteolysis activity. Its function is as follows. Component of the proteasome core, a large protease complex with broad specificity involved in protein degradation. This Frankia casuarinae (strain DSM 45818 / CECT 9043 / HFP020203 / CcI3) protein is Proteasome subunit alpha.